The following is a 340-amino-acid chain: Nitrilase (340 aa).

The region spanning 7–273 (IRAAAVQIAP…EGMVVADLDM (267 aa)) is the CN hydrolase domain. The active-site Proton acceptor is the Glu47. Lys129 is a catalytic residue. Catalysis depends on Cys163, which acts as the Nucleophile.

Belongs to the carbon-nitrogen hydrolase superfamily. Nitrilase family. Forms oligomers.

It catalyses the reaction a nitrile + 2 H2O = a carboxylate + NH4(+). It carries out the reaction phenylpropanonitrile + 2 H2O = 3-phenylpropanoate + NH4(+). The catalysed reaction is an aliphatic nitrile + 2 H2O = a carboxylate + NH4(+). Highly resistant to various miscible cosolvents and tolerates high substrate concentrations. Functionally, catalyzes the hydrolysis of a broad range of nitriles to yield their corresponding carboxylic acid and ammonia. In vitro, shows high activity toward benzylic/unsaturated nitriles. The preferred substrate is trans-cinnamonitrile, followed by mono/di-cyanopyridines and aromatic substituted nitriles, with a moderate activity toward 3-phenylpropionitrile. Shows weaker activity toward the common dinitrile fumaronitrile. Also shows weak activity toward some aliphatic nitriles, including adiponitrile and glutaronitrile, and the arylacetonitrile 2-thiopheneacetonitrile. This is Nitrilase from Paraburkholderia phymatum (strain DSM 17167 / CIP 108236 / LMG 21445 / STM815) (Burkholderia phymatum).